We begin with the raw amino-acid sequence, 487 residues long: ESCRT-I complex subunit vps23 (487 aa).

The SB domain maps to 428 to 487; it reads SERELKYYELKRKDEKLDEGIRALNQALHHESIMPASWLKGIKLLARQQFLIRDEMLQYS.

As to quaternary structure, component of the ESCRT-I complex (endosomal sorting complex required for transport I).

It is found in the cytoplasm. It localises to the endosome. The protein resides in the late endosome membrane. Component of the ESCRT-I complex, a regulator of vesicular trafficking process. Binds to ubiquitinated cargo proteins and is required for the sorting of endocytic ubiquitinated cargos into multivesicular bodies (MVBs). Mediates the association to the ESCRT-0 complex. The polypeptide is ESCRT-I complex subunit vps23 (sst6) (Schizosaccharomyces pombe (strain 972 / ATCC 24843) (Fission yeast)).